Consider the following 216-residue polypeptide: uncharacterized protein (216 aa).

The 52-residue stretch at 125–176 (YPKSTNFDSHYHDCDEYWVIIEGAGTVVVGSRSFEVEVGDCVAIGMGHHHDL) folds into the Cupin type-2 domain.

This is an uncharacterized protein from Sinorhizobium fredii (strain NBRC 101917 / NGR234).